A 994-amino-acid chain; its full sequence is MKSSGSARATRRNAVSSSSAPAHAEPPARRAAKSARKLDGAAARPLAPTNAASAKPQGRTREDKDRPLFEDIRYLGRLLGDVVREQEGDAVFDVVETIRQTAVKFRREDDKAAAQTLEKMLRKLTPEQTVSVVRAFSYFSHLANIAEDRHHNRRRRIHALAGSAAQAGTVAYALDKLKQAGDASSKTIKQFFEGALIVPVLTAHPTEVQRKSILDAQHDIARLLAERDQPLTARELAHNEALLRARVTTLWQTRMLRDARLTVADEIENALSYYRATFLDELPALYADIEEALAEHGLRARVPAFFQMGSWIGGDRDGNPNVTAATLDEAISRQAAVIFEHYLEQVHKLGAELSVSNLLVGASDALKALAAASPDQSPHRVDEPYRRALIGVYTRLAASARVRLGEGTVPVRSAGRGAAPVRATPYADAEEFAADLRVLTDSLALHHGESLATPRLAPLMRAAEVFGFHLASIDLRQSSDIHEAVVAELLARGGVEADYAALPEADKLRVLLAALADPRPLRSPYLDYSDLAKSELGVLERAHAIRAQFGARAVRNYIISHTETVSDLVEVLLLQKETGLFEGTLGTPHANARNGLMVIPLFETIADLRNASDIMRAFFALPGVGELLAHQGHEQEVMLGYSDSNKDGGFLTSNWELYRAELALVDLFDERGIKLRLFHGRGGTVGRGGGPTYQAILSQPPGTVNGQIRLTEQGEVIASKFANPEIGRRNLETVVAATLEATLAPHSNAPKQLPAFEAAMQTLSDAAMASYRALVYETPGFTDYFFSSTPITEIAELNIGSRPASRKLQDPKNRKIEDLRAIPWGFSWGQCRLLLTGWYGFGSAVAAYLDGAPDAAERGKRVALLKKMNKTWPFFANLLSNMDMVLAKTDLAVASRYAQLVADKKLRKHVFERIVAEWHRTADALAEITGAHARLAANPLLARSIKNRFPYLDPLNHLQVELIKRHRAGDTNARLRRGIHLTINGIAAGLRNTG.

The tract at residues 1–66 (MKSSGSARAT…QGRTREDKDR (66 aa)) is disordered. Low complexity-rich tracts occupy residues 14–25 (AVSSSSAPAHAE) and 41–54 (AAAR…AASA). Catalysis depends on residues His204 and Lys646.

This sequence belongs to the PEPCase type 1 family. Mg(2+) is required as a cofactor.

It carries out the reaction oxaloacetate + phosphate = phosphoenolpyruvate + hydrogencarbonate. Forms oxaloacetate, a four-carbon dicarboxylic acid source for the tricarboxylic acid cycle. This chain is Phosphoenolpyruvate carboxylase, found in Burkholderia pseudomallei (strain 668).